The primary structure comprises 293 residues: Phosphate import ATP-binding protein PstB (293 aa).

One can recognise an ABC transporter domain in the interval methionine 46–isoleucine 288. ATP is bound at residue glycine 78 to serine 85.

Belongs to the ABC transporter superfamily. Phosphate importer (TC 3.A.1.7) family. In terms of assembly, the complex is composed of two ATP-binding proteins (PstB), two transmembrane proteins (PstC and PstA) and a solute-binding protein (PstS).

The protein resides in the cell inner membrane. The catalysed reaction is phosphate(out) + ATP + H2O = ADP + 2 phosphate(in) + H(+). Its function is as follows. Part of the ABC transporter complex PstSACB involved in phosphate import. Responsible for energy coupling to the transport system. This is Phosphate import ATP-binding protein PstB from Desulfotalea psychrophila (strain LSv54 / DSM 12343).